Consider the following 112-residue polypeptide: Putative pterin-4-alpha-carbinolamine dehydratase (112 aa).

This sequence belongs to the pterin-4-alpha-carbinolamine dehydratase family.

It carries out the reaction (4aS,6R)-4a-hydroxy-L-erythro-5,6,7,8-tetrahydrobiopterin = (6R)-L-erythro-6,7-dihydrobiopterin + H2O. The polypeptide is Putative pterin-4-alpha-carbinolamine dehydratase (Shewanella baltica (strain OS223)).